Reading from the N-terminus, the 694-residue chain is Phosphatase and actin regulator 4 (694 aa).

Disordered regions lie at residues 1–354 (MEDP…SPLV) and 375–405 (QDIS…PSRL). Residues 45–54 (KPWKWRKKKS) are compositionally biased toward basic residues. The segment covering 55–84 (SDKFKETSEVLERKISMRKPREELVKRGVL) has biased composition (basic and acidic residues). The RPEL 1 repeat unit spans residues 63–88 (EVLERKISMRKPREELVKRGVLLEDP). Phosphoserine is present on residues S116, S118, S129, and S145. Composition is skewed to low complexity over residues 184-209 (AGST…TAAT) and 231-249 (TLPA…TAPA). Residues 250-259 (KQPPIPPPKP) are compositionally biased toward pro residues. Residues S264, S285, S335, and S337 each carry the phosphoserine modification. The span at 329 to 352 (LIIPPSSPSPPLPTHIPPEPPRSP) shows a compositional bias: pro residues. A compositionally biased stretch (basic and acidic residues) spans 381–392 (EDQKTEVPKKIQ). A Phosphoserine modification is found at S420. Residue T425 is modified to Phosphothreonine. Phosphoserine occurs at positions 436, 446, 457, 503, 505, 549, and 582. The tract at residues 467–562 (VPDDEEEEQT…TNLNSWPRKS (96 aa)) is disordered. Residues 546–559 (SRPSEPETNLNSWP) show a composition bias toward polar residues. RPEL repeat units lie at residues 575 to 600 (NTLI…QPKN) and 613 to 638 (RRLT…RFNE). The tract at residues 589–608 (ELEQRNILQPKNEADRQAEK) is disordered. S620 carries the phosphoserine modification.

It belongs to the phosphatase and actin regulator family. In terms of assembly, binds PPP1CA and actin.

It is found in the cytoplasm. Its subcellular location is the cell projection. It localises to the lamellipodium. Its function is as follows. Regulator of protein phosphatase 1 (PP1) required for neural tube and optic fissure closure, and enteric neural crest cell (ENCCs) migration during development. Acts as an activator of PP1 by interacting with PPP1CA and preventing phosphorylation of PPP1CA at 'Thr-320'. During neural tube closure, localizes to the ventral neural tube and activates PP1, leading to down-regulate cell proliferation within cranial neural tissue and the neural retina. Also acts as a regulator of migration of enteric neural crest cells (ENCCs) by activating PP1, leading to dephosphorylation and subsequent activation of cofilin (COF1 or COF2) and repression of the integrin signaling through the RHO/ROCK pathway. In Mus musculus (Mouse), this protein is Phosphatase and actin regulator 4 (Phactr4).